The following is a 506-amino-acid chain: Sugar transport protein 5 (506 aa).

The Cytoplasmic segment spans residues 1–19 (MAGGGLALDVSSAGNIDAK). Transmembrane regions (helical) follow at residues 20-40 (ITAA…IFGY), 81-101 (LLTA…LVAS), 117-137 (GFTF…AMLI), 141-161 (ILLG…LSEV), 168-188 (GAFN…ANLI), 201-221 (ISLG…LFIS), 287-307 (LVVA…VNAF), 325-345 (IATF…TMVI), 352-372 (FLFI…AVLL), 390-410 (VTVV…WGPL), 430-450 (LSVA…LATL), and 456-476 (GAFL…IMFL). Over 477-506 (PETKGIPVDSMYQVWEKHWYWQRFTKPTST) the chain is Cytoplasmic.

The protein belongs to the major facilitator superfamily. Sugar transporter (TC 2.A.1.1) family.

It is found in the membrane. Its function is as follows. Mediates an active uptake of hexoses, probably by sugar/hydrogen symport. The polypeptide is Sugar transport protein 5 (STP5) (Arabidopsis thaliana (Mouse-ear cress)).